We begin with the raw amino-acid sequence, 630 residues long: 1,4-alpha-glucan branching enzyme GlgB (630 aa).

Catalysis depends on aspartate 311, which acts as the Nucleophile. Glutamate 362 serves as the catalytic Proton donor.

The protein belongs to the glycosyl hydrolase 13 family. GlgB subfamily. As to quaternary structure, monomer.

The catalysed reaction is Transfers a segment of a (1-&gt;4)-alpha-D-glucan chain to a primary hydroxy group in a similar glucan chain.. It functions in the pathway glycan biosynthesis; glycogen biosynthesis. In terms of biological role, catalyzes the formation of the alpha-1,6-glucosidic linkages in glycogen by scission of a 1,4-alpha-linked oligosaccharide from growing alpha-1,4-glucan chains and the subsequent attachment of the oligosaccharide to the alpha-1,6 position. This Aquifex aeolicus (strain VF5) protein is 1,4-alpha-glucan branching enzyme GlgB.